We begin with the raw amino-acid sequence, 185 residues long: Isopentenyl-diphosphate Delta-isomerase (185 aa).

Mn(2+) contacts are provided by His-27 and His-34. The 137-residue stretch at Pro-32–Leu-168 folds into the Nudix hydrolase domain. The active site involves Cys-69. Position 69 (Cys-69) interacts with Mg(2+). His-71 contributes to the Mn(2+) binding site. Residue Glu-89 coordinates Mg(2+). Positions 118 and 120 each coordinate Mn(2+). The active site involves Glu-120.

This sequence belongs to the IPP isomerase type 1 family. Mg(2+) is required as a cofactor. Requires Mn(2+) as cofactor.

It is found in the cytoplasm. It carries out the reaction isopentenyl diphosphate = dimethylallyl diphosphate. It participates in isoprenoid biosynthesis; dimethylallyl diphosphate biosynthesis; dimethylallyl diphosphate from isopentenyl diphosphate: step 1/1. In terms of biological role, catalyzes the 1,3-allylic rearrangement of the homoallylic substrate isopentenyl (IPP) to its highly electrophilic allylic isomer, dimethylallyl diphosphate (DMAPP). In Leifsonia xyli subsp. xyli (strain CTCB07), this protein is Isopentenyl-diphosphate Delta-isomerase.